A 199-amino-acid polypeptide reads, in one-letter code: Small ribosomal subunit protein uS4 (199 aa).

The S4 RNA-binding domain occupies 91–154 (SRLDNVVYRL…KDLIIVKEAL (64 aa)).

Belongs to the universal ribosomal protein uS4 family. As to quaternary structure, part of the 30S ribosomal subunit. Contacts protein S5. The interaction surface between S4 and S5 is involved in control of translational fidelity.

In terms of biological role, one of the primary rRNA binding proteins, it binds directly to 16S rRNA where it nucleates assembly of the body of the 30S subunit. Its function is as follows. With S5 and S12 plays an important role in translational accuracy. The polypeptide is Small ribosomal subunit protein uS4 (Phytoplasma mali (strain AT)).